The following is a 196-amino-acid chain: ATP-dependent Clp protease proteolytic subunit (196 aa).

Serine 101 serves as the catalytic Nucleophile. Histidine 126 is an active-site residue.

This sequence belongs to the peptidase S14 family. In terms of assembly, component of the chloroplastic Clp protease core complex.

Its subcellular location is the plastid. It localises to the chloroplast stroma. It carries out the reaction Hydrolysis of proteins to small peptides in the presence of ATP and magnesium. alpha-casein is the usual test substrate. In the absence of ATP, only oligopeptides shorter than five residues are hydrolyzed (such as succinyl-Leu-Tyr-|-NHMec, and Leu-Tyr-Leu-|-Tyr-Trp, in which cleavage of the -Tyr-|-Leu- and -Tyr-|-Trp bonds also occurs).. Functionally, cleaves peptides in various proteins in a process that requires ATP hydrolysis. Has a chymotrypsin-like activity. Plays a major role in the degradation of misfolded proteins. The sequence is that of ATP-dependent Clp protease proteolytic subunit from Atropa belladonna (Belladonna).